The primary structure comprises 718 residues: Ribosomal RNA large subunit methyltransferase K/L (718 aa).

The THUMP domain occupies 43–154 (TQYRILLWSR…QDELVVSLDL (112 aa)).

Belongs to the methyltransferase superfamily. RlmKL family.

It localises to the cytoplasm. The catalysed reaction is guanosine(2445) in 23S rRNA + S-adenosyl-L-methionine = N(2)-methylguanosine(2445) in 23S rRNA + S-adenosyl-L-homocysteine + H(+). The enzyme catalyses guanosine(2069) in 23S rRNA + S-adenosyl-L-methionine = N(2)-methylguanosine(2069) in 23S rRNA + S-adenosyl-L-homocysteine + H(+). Specifically methylates the guanine in position 2445 (m2G2445) and the guanine in position 2069 (m7G2069) of 23S rRNA. The polypeptide is Ribosomal RNA large subunit methyltransferase K/L (Histophilus somni (strain 2336) (Haemophilus somnus)).